The primary structure comprises 96 residues: Co-chaperonin GroES (96 aa).

The protein belongs to the GroES chaperonin family. As to quaternary structure, heptamer of 7 subunits arranged in a ring. Interacts with the chaperonin GroEL.

It localises to the cytoplasm. Functionally, together with the chaperonin GroEL, plays an essential role in assisting protein folding. The GroEL-GroES system forms a nano-cage that allows encapsulation of the non-native substrate proteins and provides a physical environment optimized to promote and accelerate protein folding. GroES binds to the apical surface of the GroEL ring, thereby capping the opening of the GroEL channel. The protein is Co-chaperonin GroES of Paracidovorax citrulli (strain AAC00-1) (Acidovorax citrulli).